Here is a 116-residue protein sequence, read N- to C-terminus: Large ribosomal subunit protein bL17 (116 aa).

The protein belongs to the bacterial ribosomal protein bL17 family. As to quaternary structure, part of the 50S ribosomal subunit. Contacts protein L32.

This is Large ribosomal subunit protein bL17 from Thermosynechococcus vestitus (strain NIES-2133 / IAM M-273 / BP-1).